The chain runs to 123 residues: Methanesulfonate monooxygenase ferredoxin subunit (123 aa).

A Rieske domain is found at T4–A99. [2Fe-2S] cluster-binding residues include C43, H45, C63, and H66.

The protein belongs to the bacterial ring-hydroxylating dioxygenase ferredoxin component family. In terms of assembly, the MSA monooxygenase system consists of 4 proteins: the 2 subunits of the hydroxylase component (MsmA and MsmB), a ferredoxin (MsmC) and a ferredoxin reductase (MsmD). The ferredoxin component is dimeric. [2Fe-2S] cluster serves as cofactor.

Its subcellular location is the cytoplasm. The enzyme catalyses methanesulfonate + NADH + O2 = sulfite + formaldehyde + NAD(+) + H2O. MSAMO is inhibited by metal chelators (such as bathophenanthroline, bathocuprione, neocuprione, alpha-alpha-dipyridil and sodium EDTA) and by sodium azide, sodium arsenate and potassium cyanide. Its function is as follows. Methanesulfonate monooxygenase (MSAMO) mediates the primary degradation of methanesulfonic acid (MSA) to produce formaldehyd and inorganic sulfite by initial hydroxylation of the carbon atom prior to spontaneous cleavage of the unstable hydroxymethanesulfonic acid. MSAMO has a restricted substrate range that includes only the short-chain aliphatic sulfonates (methane- to butanesulfonate) and excludes all larger molecules, such as arylsulfonates and aromatic sulfonates. All MSAMO components are required for enzyme activity. The chain is Methanesulfonate monooxygenase ferredoxin subunit from Methylosulfonomonas methylovora.